Consider the following 247-residue polypeptide: Carboxy-S-adenosyl-L-methionine synthase (247 aa).

S-adenosyl-L-methionine is bound by residues Tyr-39, 64-66 (GCS), 89-90 (DN), 117-118 (DI), Asn-132, and Arg-199.

It belongs to the class I-like SAM-binding methyltransferase superfamily. Cx-SAM synthase family. In terms of assembly, homodimer.

It catalyses the reaction prephenate + S-adenosyl-L-methionine = carboxy-S-adenosyl-L-methionine + 3-phenylpyruvate + H2O. Its function is as follows. Catalyzes the conversion of S-adenosyl-L-methionine (SAM) to carboxy-S-adenosyl-L-methionine (Cx-SAM). This Salmonella enteritidis PT4 (strain P125109) protein is Carboxy-S-adenosyl-L-methionine synthase.